Consider the following 111-residue polypeptide: Probable 4-amino-4-deoxy-L-arabinose-phosphoundecaprenol flippase subunit ArnE (111 aa).

Helical transmembrane passes span 38–58 (LWLG…LLVL), 61–81 (LPVG…TLAA), and 91–111 (PRHW…GSAA). An EamA domain is found at 40–109 (LGLALICMGA…IISGIIILGS (70 aa)).

It belongs to the ArnE family. Heterodimer of ArnE and ArnF.

It is found in the cell inner membrane. The protein operates within bacterial outer membrane biogenesis; lipopolysaccharide biosynthesis. In terms of biological role, translocates 4-amino-4-deoxy-L-arabinose-phosphoundecaprenol (alpha-L-Ara4N-phosphoundecaprenol) from the cytoplasmic to the periplasmic side of the inner membrane. This chain is Probable 4-amino-4-deoxy-L-arabinose-phosphoundecaprenol flippase subunit ArnE, found in Salmonella newport (strain SL254).